The sequence spans 409 residues: Pyrophosphate--fructose 6-phosphate 1-phosphotransferase (409 aa).

G14 is a diphosphate binding site. D123 contributes to the Mg(2+) binding site. Substrate-binding positions include 151 to 153, 196 to 198, E268, and 325 to 328; these read TVD, MGR, and YFAR. D153 serves as the catalytic Proton acceptor.

This sequence belongs to the phosphofructokinase type A (PFKA) family. PPi-dependent PFK group II subfamily. Clade 'P' sub-subfamily. As to quaternary structure, homodimer. Mg(2+) serves as cofactor.

The protein localises to the cytoplasm. It catalyses the reaction beta-D-fructose 6-phosphate + diphosphate = beta-D-fructose 1,6-bisphosphate + phosphate + H(+). It functions in the pathway carbohydrate degradation; glycolysis; D-glyceraldehyde 3-phosphate and glycerone phosphate from D-glucose: step 3/4. Its activity is regulated as follows. Non-allosteric. Functionally, catalyzes the phosphorylation of D-fructose 6-phosphate, the first committing step of glycolysis. Uses inorganic phosphate (PPi) as phosphoryl donor instead of ATP like common ATP-dependent phosphofructokinases (ATP-PFKs), which renders the reaction reversible, and can thus function both in glycolysis and gluconeogenesis. Consistently, PPi-PFK can replace the enzymes of both the forward (ATP-PFK) and reverse (fructose-bisphosphatase (FBPase)) reactions. In Methylomonas methanica, this protein is Pyrophosphate--fructose 6-phosphate 1-phosphotransferase.